The following is a 97-amino-acid chain: Lipolysis-activating peptide 1-alpha chain (97 aa).

The N-terminal stretch at Met1–Ser21 is a signal peptide. The LCN-type CS-alpha/beta domain occupies Pro25–Lys88. 3 disulfides stabilise this stretch: Cys39-Cys62, Cys48-Cys67, and Cys52-Cys69.

This sequence belongs to the long (3 C-C) scorpion toxin superfamily. Monomer (edited version) and heterodimer (non-edited version) of this alpha chain and a beta chain (AC P0CI43). Expressed by the venom gland.

The protein resides in the secreted. Its function is as follows. The heterodimer non-edited LVP1 induces lipolysis in rat adipocytes. Induction of lipolysis by LVP1 appears to be mediated through the beta-2 adrenergic receptor pathway (ADRB2). In terms of biological role, the edited BmKBTx-like, similar to beta-toxins, may modulate voltage-gated sodium channels (Nav) and may block voltage-gated potassium channels (Kv). This Lychas mucronatus (Chinese swimming scorpion) protein is Lipolysis-activating peptide 1-alpha chain.